An 88-amino-acid polypeptide reads, in one-letter code: Large ribosomal subunit protein bL27 (88 aa).

Residues 1-21 (MAHKKGASSSRNGRDSNAQRL) are disordered. A compositionally biased stretch (polar residues) spans 7 to 19 (ASSSRNGRDSNAQ).

This sequence belongs to the bacterial ribosomal protein bL27 family.

In Frankia casuarinae (strain DSM 45818 / CECT 9043 / HFP020203 / CcI3), this protein is Large ribosomal subunit protein bL27.